Consider the following 152-residue polypeptide: Nucleoside diphosphate kinase A (152 aa).

ATP contacts are provided by Lys-12, Phe-60, Arg-88, and Thr-94. Lys-100 is covalently cross-linked (Glycyl lysine isopeptide (Lys-Gly) (interchain with G-Cter in ubiquitin)). Arg-105 and Asn-115 together coordinate ATP. His-118 serves as the catalytic Pros-phosphohistidine intermediate. A phosphoserine mark is found at Ser-120, Ser-122, and Ser-125.

It belongs to the NDK family. In terms of assembly, hexamer of two different chains: An and B (A6, A5B, A4B2, A3B3, A2B4, AB5, B6). Interacts with PRUNE1. Component of the SET complex, composed of at least ANP32A, APEX1, HMGB2, NME1, SET and TREX1. Within this complex, interacts directly with SET. Also interacts with TREX1, but only following translocation to the nucleus. It depends on Mg(2+) as a cofactor. In terms of tissue distribution, isoform 1 is expressed in heart, brain, placenta, lung, liver, skeletal muscle, pancreas, spleen and thymus. Expressed in lung carcinoma cell lines but not in normal lung tissues. Isoform 2 is ubiquitously expressed and its expression is also related to tumor differentiation.

It localises to the cytoplasm. The protein resides in the nucleus. It catalyses the reaction a 2'-deoxyribonucleoside 5'-diphosphate + ATP = a 2'-deoxyribonucleoside 5'-triphosphate + ADP. The catalysed reaction is a ribonucleoside 5'-diphosphate + ATP = a ribonucleoside 5'-triphosphate + ADP. Autophosphorylation at His-118 increases serine/threonine protein kinase activity of the enzyme. Interaction with the SET complex inhibits the endonuclease activity. Major role in the synthesis of nucleoside triphosphates other than ATP. The ATP gamma phosphate is transferred to the NDP beta phosphate via a ping-pong mechanism, using a phosphorylated active-site intermediate. Possesses nucleoside-diphosphate kinase, serine/threonine-specific protein kinase, geranyl and farnesyl pyrophosphate kinase, histidine protein kinase and 3'-5' exonuclease activities. Involved in cell proliferation, differentiation and development, signal transduction, G protein-coupled receptor endocytosis, and gene expression. Required for neural development including neural patterning and cell fate determination. During GZMA-mediated cell death, works in concert with TREX1. NME1 nicks one strand of DNA and TREX1 removes bases from the free 3' end to enhance DNA damage and prevent DNA end reannealing and rapid repair. In Homo sapiens (Human), this protein is Nucleoside diphosphate kinase A (NME1).